We begin with the raw amino-acid sequence, 379 residues long: Type II methyltransferase M.CvrRI (379 aa).

The protein belongs to the N(4)/N(6)-methyltransferase family.

It catalyses the reaction a 2'-deoxyadenosine in DNA + S-adenosyl-L-methionine = an N(6)-methyl-2'-deoxyadenosine in DNA + S-adenosyl-L-homocysteine + H(+). Its function is as follows. A gamma subtype methylase, recognizes the double-stranded sequence 5'-TGCA-3', methylates A-4 on both strands, and protects the DNA from cleavage by the CviRI endonuclease. This Chlorella (PBCV-XZ-6E) protein is Type II methyltransferase M.CvrRI (CVIRIM).